We begin with the raw amino-acid sequence, 397 residues long: Putative 3'(2'),5'-bisphosphate nucleotidase, mitochondrial (397 aa).

A mitochondrion-targeting transit peptide spans 1–16 (MYILDTGARFSAVRFS). Asp91 functions as the Proton acceptor in the catalytic mechanism. Mg(2+) is bound by residues Glu114, Asp174, Ile176, and Asp177. Residue Thr179 is the Proton acceptor of the active site. Residues Thr179, Ser305, Lys308, and Asp334 each contribute to the adenosine 3',5'-bisphosphate site. Ser305, Lys308, and Asp334 together coordinate AMP. Asp334 is a binding site for Mg(2+).

Belongs to the inositol monophosphatase superfamily. It depends on Mg(2+) as a cofactor.

The protein resides in the mitochondrion. The catalysed reaction is 3'-phosphoadenylyl sulfate + H2O = adenosine 5'-phosphosulfate + phosphate. It carries out the reaction adenosine 3',5'-bisphosphate + H2O = AMP + phosphate. It catalyses the reaction adenosine 2',5'-bisphosphate + H2O = AMP + phosphate. Functionally, phosphatase that converts adenosine 3'-phosphate 5'-phosphosulfate (PAPS) to adenosine 5'-phosphosulfate (APS) and 3'(2')-phosphoadenosine 5'-phosphate (PAP) to AMP. The polypeptide is Putative 3'(2'),5'-bisphosphate nucleotidase, mitochondrial (Arabidopsis thaliana (Mouse-ear cress)).